Consider the following 591-residue polypeptide: Aspartate--tRNA(Asp/Asn) ligase (591 aa).

Glu176 lines the L-aspartate pocket. The interval 200–203 (QLFK) is aspartate. Arg222 serves as a coordination point for L-aspartate. ATP is bound by residues 222–224 (RDE) and Gln231. His450 provides a ligand contact to L-aspartate. An ATP-binding site is contributed by Glu484. Arg491 contributes to the L-aspartate binding site. Position 536–539 (536–539 (GLDR)) interacts with ATP.

Belongs to the class-II aminoacyl-tRNA synthetase family. Type 1 subfamily. As to quaternary structure, homodimer.

The protein localises to the cytoplasm. The catalysed reaction is tRNA(Asx) + L-aspartate + ATP = L-aspartyl-tRNA(Asx) + AMP + diphosphate. Functionally, aspartyl-tRNA synthetase with relaxed tRNA specificity since it is able to aspartylate not only its cognate tRNA(Asp) but also tRNA(Asn). Reaction proceeds in two steps: L-aspartate is first activated by ATP to form Asp-AMP and then transferred to the acceptor end of tRNA(Asp/Asn). This is Aspartate--tRNA(Asp/Asn) ligase from Bacillus thuringiensis (strain Al Hakam).